The primary structure comprises 184 residues: Rubrerythrin-2 (184 aa).

In terms of domain architecture, Ferritin-like diiron spans 2-146; the sequence is SVKNAMTADF…DAQDSAKENK (145 aa). Fe(3+)-binding residues include glutamate 19, glutamate 52, glutamate 94, glutamate 97, glutamate 128, histidine 131, cysteine 156, cysteine 159, cysteine 171, and cysteine 174. The 34-residue stretch at 151-184 folds into the Rubredoxin-like domain; that stretch reads GKVYICPVCGFTTLDENIEQCPICGVKKDKFQAF.

The cofactor is Fe(3+).

The enzyme catalyses H2O2 + NADH + H(+) = NAD(+) + 2 H2O. Rubredoxin (Rd) increases the NADH consumption rate by serving as an intermediary electron-transfer shuttle between NROR and Rbr2. In terms of biological role, functions as the terminal component of an NADH peroxidase (NADH:H(2)O(2) oxidoreductase) when using NADH:rubredoxin oxidoreductase (NROR) as the electron transport intermediary from NADH to Rbr2. In Clostridium acetobutylicum (strain ATCC 824 / DSM 792 / JCM 1419 / IAM 19013 / LMG 5710 / NBRC 13948 / NRRL B-527 / VKM B-1787 / 2291 / W), this protein is Rubrerythrin-2 (rbr2).